Reading from the N-terminus, the 594-residue chain is UvrABC system protein C (594 aa).

The GIY-YIG domain maps to 13–99; that stretch reads HSSGVYQYFD…IKQLKPKYNI (87 aa). The 36-residue stretch at 205–240 folds into the UVR domain; that stretch reads DKLIKELELKMERLSNNLRFEEALIYRDRIAKIQKI.

This sequence belongs to the UvrC family. In terms of assembly, interacts with UvrB in an incision complex.

It is found in the cytoplasm. Functionally, the UvrABC repair system catalyzes the recognition and processing of DNA lesions. UvrC both incises the 5' and 3' sides of the lesion. The N-terminal half is responsible for the 3' incision and the C-terminal half is responsible for the 5' incision. The polypeptide is UvrABC system protein C (Helicobacter pylori (strain Shi470)).